Consider the following 234-residue polypeptide: MITAIVLAGGVGKRMGMEIPKQFVMVNEKPIIIYTLESFDRHPKIDQVVVVCKQGWADTMWGYIREFGIKKVKWVISGGSIVQKSINNAVQFLSDKCVEDDIVVIHDGIRPLVDEHVLSDVIVKCQEYGNAVTSLPYNEQIFIKETEKTTNKYIDRNTLRRVSTPQAYKYEVLHDAYDEAISQNIGMVDSAYTNTMMVDLGHTLYFAAGSDKNIKLTTTDDLALFKAYLREKEL.

CTP-binding positions include 7–10 and 79–85; these read LAGG and GSIVQKS.

It belongs to the IspD/TarI cytidylyltransferase family. TarI subfamily.

The enzyme catalyses D-ribitol 5-phosphate + CTP + H(+) = CDP-L-ribitol + diphosphate. It participates in cell wall biogenesis; poly(ribitol phosphate) teichoic acid biosynthesis. In terms of biological role, catalyzes the transfer of the cytidylyl group of CTP to D-ribitol 5-phosphate. The polypeptide is Ribitol-5-phosphate cytidylyltransferase (Lacticaseibacillus paracasei (strain ATCC 334 / BCRC 17002 / CCUG 31169 / CIP 107868 / KCTC 3260 / NRRL B-441) (Lactobacillus paracasei)).